The sequence spans 228 residues: Tungstate uptake system permease protein TupB (228 aa).

5 helical membrane passes run 25–45 (IIFLSVFVSSTATAIAAAVSI), 65–85 (VLYSLMSVPSVIVGLVVAIGL), 102–122 (AMIIAQALLVFPLCLGLTYSL), 144–164 (VIILIIRELKAELFINVVTTF), and 203–223 (MAIALGLVLLMISFAINAVIY). An ABC transmembrane type-1 domain is found at 26–222 (IFLSVFVSST…MISFAINAVI (197 aa)).

The protein belongs to the binding-protein-dependent transport system permease family. As to quaternary structure, the complex is composed of two ATP-binding proteins (TupC), two transmembrane proteins (TupB) and a solute-binding protein (TupA).

The protein resides in the cell membrane. Part of an ABC transporter complex involved in tungstate uptake. Probably responsible for the translocation of the substrate across the membrane. The sequence is that of Tungstate uptake system permease protein TupB from Peptoclostridium acidaminophilum (Eubacterium acidaminophilum).